A 131-amino-acid chain; its full sequence is Transcription antitermination protein NusB (131 aa).

This sequence belongs to the NusB family.

Involved in transcription antitermination. Required for transcription of ribosomal RNA (rRNA) genes. Binds specifically to the boxA antiterminator sequence of the ribosomal RNA (rrn) operons. This chain is Transcription antitermination protein NusB, found in Campylobacter hominis (strain ATCC BAA-381 / DSM 21671 / CCUG 45161 / LMG 19568 / NCTC 13146 / CH001A).